Here is a 47-residue protein sequence, read N- to C-terminus: Capistruin (47 aa).

Residues 1-28 constitute a propeptide that is removed on maturation; that stretch reads MVRLLAKLLRSTIHGSNGVSLDAVSSTH. Residues 29–37 constitute a cross-link (isoaspartyl glycine isopeptide (Gly-Asp)); it reads GTPGFQTPD.

Post-translationally, it is assumed that the two processing enzymes CapB/CapC convert the precursor protein CapA into the mature lasso peptide capistruin. CapB is assumed to cleave the precursor protein CapA and to set an N-terminal Gly free, whose a-NH2 group acts as the nucleophile in the subsequent cyclization reaction. CapC is most likely involved in the side-chain carboxyl group activation of aspartic acid at position 9 generating the electrophile for the condensation reaction. CapD may export capistruin outside of the producing cells.

The protein localises to the secreted. Functionally, peptide antibiotic that functions through inhibition of the bacterial DNA-dependent RNA polymerase (RNAP). Inhibits transcription by binding in RNAP secondary channel, where it sterically blocks the folding of the trigger loop, which is essential for efficient catalysis. In contrast to MccJ25, does not restrict access of nucleotide substrates to the catalytic center and shows a non-competitive mode of inhibition. Shows activity against closely related Gram-negative Burkholderia and Pseudomonas strains. Is not active against Gram-positive bacteria. The sequence is that of Capistruin from Burkholderia thailandensis (strain ATCC 700388 / DSM 13276 / CCUG 48851 / CIP 106301 / E264).